We begin with the raw amino-acid sequence, 743 residues long: Serine-rich coiled-coil domain-containing protein 1 (743 aa).

Disordered stretches follow at residues 1–125 and 156–175; these read MGDS…SRNK and KSEGDDSGFTEEQTRRSVKQ. A compositionally biased stretch (low complexity) spans 29-56; that stretch reads LPSSPSSSNTVGVHSSSPSSTNSSSGST. A compositionally biased stretch (polar residues) spans 81-102; the sequence is EPTNQNLSISNGAQPGQSSMQK. The stretch at 672 to 713 forms a coiled coil; the sequence is MKDECSMLKLQLKEKDELISQLQEELEKVQHLQKAFASRVDK.

Belongs to the CCSER family.

The polypeptide is Serine-rich coiled-coil domain-containing protein 1 (CCSER1) (Bos taurus (Bovine)).